The chain runs to 432 residues: Pentatricopeptide repeat-containing protein 2, mitochondrial (432 aa).

Residues 1-33 (MQFIKRTFPRRAFVDLLLNRFCLREFATTYSVS) constitute a mitochondrion transit peptide. 4 PPR repeats span residues 108-142 (KTVAYNLVLQYHLAKGHYNAAWSLYNDMKKRQQKP), 143-179 (SDHTYSILLKGFCDAIEKNKQGNFSKLREYSEKVTAS), 360-394 (NLQVYHEKLRNLVQQGQAAECLNTIKRMSHNGPFP), and 395-429 (TQQTFLIVLSLCKRPKFYSYTKSFLDLAKKLNVPV).

The protein resides in the mitochondrion. Mitochondrial RNA-binding protein that acts as a general translation factor. Plays a critical role in the synthesis of all mitochondrial DNA-encoded oxidative phosphorylation subunits, which are essential for mitochondrial respiration. Essential for the expression of iron-sulfur cluster (ISC) proteins as well as other heme proteins related to iron-sensing, and thus plays a key role in iron homeostasis. In Schizosaccharomyces pombe (strain 972 / ATCC 24843) (Fission yeast), this protein is Pentatricopeptide repeat-containing protein 2, mitochondrial.